The sequence spans 316 residues: Thioredoxin reductase (316 aa).

36–43 (ERGIPGGQ) serves as a coordination point for FAD. The cysteines at positions 135 and 138 are disulfide-linked. Residue 278–287 (DIREKSLRQI) participates in FAD binding.

This sequence belongs to the class-II pyridine nucleotide-disulfide oxidoreductase family. In terms of assembly, homodimer. FAD serves as cofactor.

The protein resides in the cytoplasm. It catalyses the reaction [thioredoxin]-dithiol + NADP(+) = [thioredoxin]-disulfide + NADPH + H(+). In Bacillus subtilis (strain 168), this protein is Thioredoxin reductase (trxB).